The following is a 28-amino-acid chain: M-ectatotoxin-Eb2c (28 aa).

Expressed by the venom gland.

The protein localises to the secreted. Its function is as follows. Antimicrobial peptide active against Gram-negative bacterium E.coli MH1 (MIC=3.5 uM) and P.aeruginosa PAO1 (MIC=10 uM) and against Gram-positive bacterium A.globiformis VKM Ac-1112 (MIC=1.25 uM). The sequence is that of M-ectatotoxin-Eb2c from Ectatomma brunneum (Ant).